We begin with the raw amino-acid sequence, 532 residues long: tRNA-2-methylthio-N(6)-dimethylallyladenosine synthase 2 (532 aa).

The segment at 1–21 is disordered; it reads MTSTVAHGAGSAGPADDAEPM. The 117-residue stretch at 24–140 folds into the MTTase N-terminal domain; sequence RTYQVRTYGC…LPALLDRARH (117 aa). Residues cysteine 33, cysteine 69, cysteine 103, cysteine 177, cysteine 181, and cysteine 184 each coordinate [4Fe-4S] cluster. Positions 163–399 constitute a Radical SAM core domain; sequence RESAYAAWVS…VELQEQISLE (237 aa). A TRAM domain is found at 402-470; that stretch reads RAIVGQRVEL…PHHLIADGGI (69 aa). The segment at 510 to 532 is disordered; sequence TSCGSAGGCGSADGAGSSAGDPQ. Low complexity predominate over residues 523–532; it reads GAGSSAGDPQ.

This sequence belongs to the methylthiotransferase family. MiaB subfamily. Monomer. Requires [4Fe-4S] cluster as cofactor.

It is found in the cytoplasm. It catalyses the reaction N(6)-dimethylallyladenosine(37) in tRNA + (sulfur carrier)-SH + AH2 + 2 S-adenosyl-L-methionine = 2-methylsulfanyl-N(6)-dimethylallyladenosine(37) in tRNA + (sulfur carrier)-H + 5'-deoxyadenosine + L-methionine + A + S-adenosyl-L-homocysteine + 2 H(+). Functionally, catalyzes the methylthiolation of N6-(dimethylallyl)adenosine (i(6)A), leading to the formation of 2-methylthio-N6-(dimethylallyl)adenosine (ms(2)i(6)A) at position 37 in tRNAs that read codons beginning with uridine. The polypeptide is tRNA-2-methylthio-N(6)-dimethylallyladenosine synthase 2 (Mycobacterium marinum (strain ATCC BAA-535 / M)).